A 208-amino-acid chain; its full sequence is Protein GrpE (208 aa).

Basic and acidic residues predominate over residues 1 to 12 (MTNKDESVEKNT). The interval 1-49 (MTNKDESVEKNTESTVEVTNVKQNIDDSVEQTEESKGHLQDEAIEETSD) is disordered. Positions 13–23 (ESTVEVTNVKQ) are enriched in polar residues.

This sequence belongs to the GrpE family. In terms of assembly, homodimer.

Its subcellular location is the cytoplasm. Functionally, participates actively in the response to hyperosmotic and heat shock by preventing the aggregation of stress-denatured proteins, in association with DnaK and GrpE. It is the nucleotide exchange factor for DnaK and may function as a thermosensor. Unfolded proteins bind initially to DnaJ; upon interaction with the DnaJ-bound protein, DnaK hydrolyzes its bound ATP, resulting in the formation of a stable complex. GrpE releases ADP from DnaK; ATP binding to DnaK triggers the release of the substrate protein, thus completing the reaction cycle. Several rounds of ATP-dependent interactions between DnaJ, DnaK and GrpE are required for fully efficient folding. The chain is Protein GrpE from Staphylococcus aureus (strain bovine RF122 / ET3-1).